The sequence spans 251 residues: Flap endonuclease Xni (251 aa).

Asp104 lines the Mg(2+) pocket. A 5'-3' exonuclease domain is found at 160–249; the sequence is VLPRQLPDYW…IDGNLQQLRL (90 aa). Residues Leu171, Ala172, Pro180, Val182, and Ile185 each contribute to the K(+) site. Residues 184-189 form an interaction with DNA region; it reads GIGPKS.

The protein belongs to the Xni family. The cofactor is Mg(2+). It depends on K(+) as a cofactor.

Its function is as follows. Has flap endonuclease activity. During DNA replication, flap endonucleases cleave the 5'-overhanging flap structure that is generated by displacement synthesis when DNA polymerase encounters the 5'-end of a downstream Okazaki fragment. The protein is Flap endonuclease Xni of Salmonella dublin (strain CT_02021853).